We begin with the raw amino-acid sequence, 377 residues long: Probable multidrug ABC transporter permease YbhS (377 aa).

Over 1–28 (MSNPILSWRRVRALCVKETRQIVRDPSS) the chain is Cytoplasmic. A helical membrane pass occupies residues 29 to 49 (WLIAVVIPLLLLFIFGYGINL). Topologically, residues 50 to 181 (DSSKLRVGIL…WFNPAAISQH (132 aa)) are periplasmic. One can recognise an ABC transmembrane type-2 domain in the interval 145-375 (IWQIWQMQRA…GLTWLKTKRR (231 aa)). A helical transmembrane segment spans residues 182-202 (FIIPGAVTIIMTVIGAILTSL). Residues 203 to 234 (VVAREWERGTMEALLSTEITRTELLLCKLIPY) are Cytoplasmic-facing. The chain crosses the membrane as a helical span at residues 235–255 (YFLGMLAMLLCMLVSVFILGV). Topologically, residues 256–261 (PYRGSL) are periplasmic. A helical membrane pass occupies residues 262-282 (LILFFISSLFLLSTLGMGLLI). Residues 283-291 (STITRNQFN) lie on the Cytoplasmic side of the membrane. The helical transmembrane segment at 292 to 312 (AAQVALNAAFLPSIMLSGFIF) threads the bilayer. The Periplasmic portion of the chain corresponds to 313–345 (QIDSMPAVIRAVTYIIPARYFVSTLQSLFLAGN). A helical transmembrane segment spans residues 346–366 (IPVVLVVNVLFLIASAVMFIG). Residues 367–377 (LTWLKTKRRLD) lie on the Cytoplasmic side of the membrane.

It belongs to the ABC-2 integral membrane protein family. The complex is probably composed of two ATP-binding proteins (YbhF) and two transmembrane proteins (YbhR and YbhS).

Its subcellular location is the cell inner membrane. Functionally, part of the ABC transporter complex YbhFSR that could be involved in efflux of cefoperazone. Probably involved in the translocation of the substrate across the membrane. This chain is Probable multidrug ABC transporter permease YbhS (ybhS), found in Escherichia coli O157:H7.